The sequence spans 312 residues: MVRRRKGRVIHGVILLDKPTGISSNDALQKVKRLYGAEKAGHTGALDPLATGMLPICLGEATKFSQFLLDSDKRYRVIAKLGERTDTSDSDGQVVQTRPVHVDYDTLLACIAKFRGETDQVPSMFSALKYQGRPLYEYARQGIEVPREARKITVYEIELHRFEGDEVEMEVHCSKGTYIRTIVDDLGEMLGCGAHVTMLRRVGVANYPYERMVTLEQLNALVEQAHRDEKAVADVLDPLLLPMDTAVEALPEVNVIPELMTLIQHGQAVQVSGAPSDGMVRITGGEQKLFLGVGEIDDNGKVAPKRLVVYGE.

Residue Asp47 is the Nucleophile of the active site.

It belongs to the pseudouridine synthase TruB family. Type 1 subfamily.

It carries out the reaction uridine(55) in tRNA = pseudouridine(55) in tRNA. Its function is as follows. Responsible for synthesis of pseudouridine from uracil-55 in the psi GC loop of transfer RNAs. The polypeptide is tRNA pseudouridine synthase B (Vibrio cholerae serotype O1 (strain ATCC 39541 / Classical Ogawa 395 / O395)).